The sequence spans 35 residues: Turgencin-B (35 aa).

2 positions are modified to methionine sulfoxide: methionine 5 and methionine 9. Intrachain disulfides connect cysteine 7–cysteine 31, cysteine 11–cysteine 27, and cysteine 16–cysteine 24. At glycine 35 the chain carries Glycine amide.

Oxidation likely reduces antimicrobial activity against Gram-positive bacteria and Gram-negative bacteria.

The protein localises to the secreted. In terms of biological role, has antimicrobial activity against Gram-positive bacteria (C.glutamicum ATCC 13032 (MIC=1.6 uM) and B.subtilis ATCC 23857 (MIC=1.6 uM)) and Gram-negative bacteria (E.coli ATCC 25922 (MIC=12.5 uM) and P.aeruginosa ATCC 27853 (MIC=25.0 uM)). Displays very low activity against the Gram-positive bacteria S.aureus ATCC 9144 (MIC&gt;100 uM). The polypeptide is Turgencin-B (Synoicum turgens (Colonial ascidian)).